The sequence spans 466 residues: Soluble pyridine nucleotide transhydrogenase (466 aa).

36 to 45 (ERYHNVGGGC) serves as a coordination point for FAD.

Belongs to the class-I pyridine nucleotide-disulfide oxidoreductase family. FAD is required as a cofactor.

The protein resides in the cytoplasm. It catalyses the reaction NAD(+) + NADPH = NADH + NADP(+). In terms of biological role, conversion of NADPH, generated by peripheral catabolic pathways, to NADH, which can enter the respiratory chain for energy generation. In Salmonella paratyphi A (strain ATCC 9150 / SARB42), this protein is Soluble pyridine nucleotide transhydrogenase.